A 225-amino-acid polypeptide reads, in one-letter code: Thymidylate kinase (225 aa).

An ATP-binding site is contributed by 10-17 (GGEGAGKT).

The protein belongs to the thymidylate kinase family.

It carries out the reaction dTMP + ATP = dTDP + ADP. Phosphorylation of dTMP to form dTDP in both de novo and salvage pathways of dTTP synthesis. This Oceanobacillus iheyensis (strain DSM 14371 / CIP 107618 / JCM 11309 / KCTC 3954 / HTE831) protein is Thymidylate kinase.